The primary structure comprises 258 residues: Aquaporin PIP1-2 (258 aa).

Residues 1–37 (MEGKEEDVRLGANKFTERQPIGTAAQSQDKDYKEPPP) are disordered. At 1-55 (MEGKEEDVRLGANKFTERQPIGTAAQSQDKDYKEPPPAPLFEPGELSSWSFYRAG) the chain is on the cytoplasmic side. Residues 56-76 (IAEFVATFLFLYITILTVMGV) traverse the membrane as a helical segment. At 77–89 (VKSSTKCSTVGIQ) the chain is on the extracellular side. The helical transmembrane segment at 90-110 (GIAWAFGGMIFALVYCTAGIS) threads the bilayer. Topologically, residues 111-133 (GGHINPAVTFGLFLARKLSLTRA) are cytoplasmic. The short motif at 115–117 (NPA) is the NPA 1 element. The helical transmembrane segment at 134-154 (LFYMVMQCLGAICGAGVVKGF) threads the bilayer. Topologically, residues 155–175 (QKGLYENNGGGANVVAPGYTK) are extracellular. A helical transmembrane segment spans residues 176-196 (GDGLGAEIVGTFILVYTVFSA). Over 197–209 (TDAKRSARDSHVP) the chain is Cytoplasmic. A helical membrane pass occupies residues 210-230 (ILAPLPIGFAVFLVHLATIPI). Residues 231–258 (TGTGINPARSLGAAIIYNKGHAWDDHWI) are Extracellular-facing. Residues 236 to 238 (NPA) carry the NPA 2 motif.

Belongs to the MIP/aquaporin (TC 1.A.8) family. PIP (TC 1.A.8.11) subfamily. In terms of tissue distribution, barely detectable in roots, leaves and fruits.

It is found in the cell membrane. Water channel required to facilitate the transport of water across cell membrane; mercury-insensitive. Contributes to the tolerance to multiple abiotic stresses including salt (NaCl), cold and water deprivation, by modulating cytosolic K(+)/Na(+) ratio, maintaining osmotic balance, and reducing membrane injury (e.g. oxidative injury). The protein is Aquaporin PIP1-2 of Musa acuminata (Banana).